A 207-amino-acid chain; its full sequence is ATP-dependent Clp protease proteolytic subunit (207 aa).

S111 (nucleophile) is an active-site residue. H136 is a catalytic residue.

It belongs to the peptidase S14 family. As to quaternary structure, fourteen ClpP subunits assemble into 2 heptameric rings which stack back to back to give a disk-like structure with a central cavity, resembling the structure of eukaryotic proteasomes.

It localises to the cytoplasm. The enzyme catalyses Hydrolysis of proteins to small peptides in the presence of ATP and magnesium. alpha-casein is the usual test substrate. In the absence of ATP, only oligopeptides shorter than five residues are hydrolyzed (such as succinyl-Leu-Tyr-|-NHMec, and Leu-Tyr-Leu-|-Tyr-Trp, in which cleavage of the -Tyr-|-Leu- and -Tyr-|-Trp bonds also occurs).. Cleaves peptides in various proteins in a process that requires ATP hydrolysis. Has a chymotrypsin-like activity. Plays a major role in the degradation of misfolded proteins. The protein is ATP-dependent Clp protease proteolytic subunit of Yersinia enterocolitica serotype O:8 / biotype 1B (strain NCTC 13174 / 8081).